Reading from the N-terminus, the 154-residue chain is MYPAHLLVLLAVCVSLLGASAISPRPLNLIQFSQLIQCANKGKRATYHYMDYGCYCSKGGSGTPVDALDRCCKTHDDCYGQAEKKGCFPLLSLYNFACFPGAPQCGKGNTCQRFVCACDLKAALCFAKSPYNNNYNIDIKKKCQTLIYMRLQTQ.

An N-terminal signal peptide occupies residues 1–21 (MYPAHLLVLLAVCVSLLGASA). Positions 22 to 27 (ISPRPL) are excised as a propeptide. 7 disulfides stabilise this stretch: Cys38–Cys98, Cys54–Cys143, Cys56–Cys72, Cys71–Cys125, Cys78–Cys118, Cys87–Cys111, and Cys105–Cys116. Ca(2+) is bound by residues Tyr55, Ser57, and Gly59. His75 is a catalytic residue. Asp76 contributes to the Ca(2+) binding site. Asp119 is an active-site residue.

This sequence belongs to the phospholipase A2 family. Group I subfamily. D49 sub-subfamily. Ca(2+) is required as a cofactor. As to expression, expressed by the venom gland.

The protein localises to the secreted. It catalyses the reaction a 1,2-diacyl-sn-glycero-3-phosphocholine + H2O = a 1-acyl-sn-glycero-3-phosphocholine + a fatty acid + H(+). In terms of biological role, snake venom phospholipase A2 (PLA2) that inhibits neuromuscular transmission by blocking acetylcholine release from the nerve termini. PLA2 catalyzes the calcium-dependent hydrolysis of the 2-acyl groups in 3-sn-phosphoglycerides. This chain is Basic phospholipase A2 PC20, found in Laticauda colubrina (Yellow-lipped sea krait).